The sequence spans 203 residues: Putative 3-methyladenine DNA glycosylase (203 aa).

This sequence belongs to the DNA glycosylase MPG family.

The sequence is that of Putative 3-methyladenine DNA glycosylase from Clostridium tetani (strain Massachusetts / E88).